The sequence spans 373 residues: Queuine tRNA-ribosyltransferase (373 aa).

Asp-90 functions as the Proton acceptor in the catalytic mechanism. Substrate contacts are provided by residues 90-94 (DSGGF), Asp-144, Gln-193, and Gly-220. Residues 251 to 257 (GVGTPED) are RNA binding. Asp-270 functions as the Nucleophile in the catalytic mechanism. Residues 275-279 (TRNAR) form an RNA binding; important for wobble base 34 recognition region. Zn(2+) is bound by residues Cys-308, Cys-310, Cys-313, and His-339.

It belongs to the queuine tRNA-ribosyltransferase family. In terms of assembly, homodimer. Within each dimer, one monomer is responsible for RNA recognition and catalysis, while the other monomer binds to the replacement base PreQ1. The cofactor is Zn(2+).

It carries out the reaction 7-aminomethyl-7-carbaguanine + guanosine(34) in tRNA = 7-aminomethyl-7-carbaguanosine(34) in tRNA + guanine. Its pathway is tRNA modification; tRNA-queuosine biosynthesis. Functionally, catalyzes the base-exchange of a guanine (G) residue with the queuine precursor 7-aminomethyl-7-deazaguanine (PreQ1) at position 34 (anticodon wobble position) in tRNAs with GU(N) anticodons (tRNA-Asp, -Asn, -His and -Tyr). Catalysis occurs through a double-displacement mechanism. The nucleophile active site attacks the C1' of nucleotide 34 to detach the guanine base from the RNA, forming a covalent enzyme-RNA intermediate. The proton acceptor active site deprotonates the incoming PreQ1, allowing a nucleophilic attack on the C1' of the ribose to form the product. After dissociation, two additional enzymatic reactions on the tRNA convert PreQ1 to queuine (Q), resulting in the hypermodified nucleoside queuosine (7-(((4,5-cis-dihydroxy-2-cyclopenten-1-yl)amino)methyl)-7-deazaguanosine). The sequence is that of Queuine tRNA-ribosyltransferase from Campylobacter lari (strain RM2100 / D67 / ATCC BAA-1060).